A 297-amino-acid chain; its full sequence is Protease HtpX homolog (297 aa).

2 consecutive transmembrane segments (helical) span residues 14–34 (IVLLFVFFILVALVGAAVGYL) and 38–58 (SLETGVVAAIVIGAIYTIIMV). Histidine 144 serves as a coordination point for Zn(2+). Residue glutamate 145 is part of the active site. Histidine 148 contacts Zn(2+). 2 helical membrane passes run 159–179 (IALALAAAITLLTNIGGNWWF) and 199–219 (ILLLVFSILMMVLAPLAAAAI). Glutamate 228 provides a ligand contact to Zn(2+).

It belongs to the peptidase M48B family. The cofactor is Zn(2+).

The protein localises to the cell membrane. This is Protease HtpX homolog from Leuconostoc mesenteroides subsp. mesenteroides (strain ATCC 8293 / DSM 20343 / BCRC 11652 / CCM 1803 / JCM 6124 / NCDO 523 / NBRC 100496 / NCIMB 8023 / NCTC 12954 / NRRL B-1118 / 37Y).